The sequence spans 343 residues: Sodium/bile acid cotransporter 7-A (343 aa).

The Cytoplasmic segment spans residues 1–10; it reads MGLLERLRKE. Residues 11–31 traverse the membrane as a helical segment; the sequence is WFIVGIILVIAAAKLEPTVGV. Residues 32-37 lie on the Extracellular side of the membrane; sequence KGGPLK. The chain crosses the membrane as a helical span at residues 38–58; that stretch reads PEITITYIAVSAIFFNSGLSL. The Cytoplasmic portion of the chain corresponds to 59-71; it reads KTEELTNALMHVK. A helical membrane pass occupies residues 72–92; sequence LHLFVQLFTLVFFPTAIWLFL. The Extracellular segment spans residues 93–116; sequence QVLSLTPINEWLLKGLQTVSCMPP. A helical membrane pass occupies residues 117–137; the sequence is PVSSAVILTKAVGGNEAAAIF. Residue N138 is a topological domain, cytoplasmic. A helical transmembrane segment spans residues 139 to 159; it reads SAFGSFLGIVVTPLLLLLFLG. At 160 to 163 the chain is on the extracellular side; sequence SSSS. The chain crosses the membrane as a helical span at residues 164 to 184; it reads VPFTSIFSQLFMTVVVPLIIG. Residues 185-201 lie on the Cytoplasmic side of the membrane; that stretch reads QIVRRYIKDWLERKKPP. A helical membrane pass occupies residues 202 to 222; that stretch reads FGAISSCVLLMIIYTTFCDTF. Residues 223–234 are Extracellular-facing; it reads SNPNIDLDTFSL. A helical membrane pass occupies residues 235–255; it reads VVIVFIIFFIQLAFMLLTFLF. Topologically, residues 256-270 are cytoplasmic; the sequence is STSKNSGFTPADTVA. Residues 271–291 traverse the membrane as a helical segment; it reads IVFCSTHKSLTLGIPMLKIVF. The Extracellular segment spans residues 292 to 298; it reads VGYEHLS. A helical membrane pass occupies residues 299-319; that stretch reads LISVPLLIYHPAQILLGSVLV. At 320–343 the chain is on the cytoplasmic side; that stretch reads PTIKSWMLSRQKALKLTRQPKIPL.

This sequence belongs to the bile acid:sodium symporter (BASS) (TC 2.A.28) family. As to expression, strongly expressed in small intestine. Moderately expressed in spleen. Weakly expressed in skeletal muscle. Not detected in other tissues tested.

Its subcellular location is the cell membrane. It localises to the endoplasmic reticulum membrane. The protein localises to the golgi apparatus membrane. Functionally, involved in teeth and skeletal development. Has an essential role in the biosynthesis and trafficking of glycosaminoglycans and glycoproteins to produce a proper functioning extracellular matrix. Required for extracellular matrix mineralization. Also involved in the regulation of cellular calcium homeostasis. Does not show transport activity towards bile acids or steroid sulfates. This is Sodium/bile acid cotransporter 7-A (slc10a7-a) from Xenopus laevis (African clawed frog).